A 272-amino-acid chain; its full sequence is Putative G-protein coupled receptor GPR32P1 (272 aa).

The disordered stretch occupies residues 1–24 (MNGVSEGTRGCSDRQPGALTQGHS). The Extracellular segment spans residues 1-46 (MNGVSEGTRGCSDRQPGALTQGHSCSRKMNASRCLSEEVGSLRPLT). Asparagine 30 is a glycosylation site (N-linked (GlcNAc...) asparagine). The helical transmembrane segment at 47–67 (MAVLSASFVVGVLGNGLVPWV) threads the bilayer. Topologically, residues 68 to 78 (TVFRMARTVST) are cytoplasmic. The helical transmembrane segment at 79-99 (VCFFHLALADFMLSLSLPILV) threads the bilayer. Residues 100 to 116 (YYIVSRQWLLGEWACKL) are Extracellular-facing. A disulfide bridge links cysteine 114 with cysteine 191. A helical membrane pass occupies residues 117–137 (YTGFVFLTFSTSNCLLVLISV). Topologically, residues 138–158 (DRCISVLYPVWALNHRTEQRA) are cytoplasmic. Residues 159–179 (SWLAFGVWLLAAALCSAHLKF) traverse the membrane as a helical segment. Topologically, residues 180 to 213 (RTTRKWNGCMQCYLQFNLENETAQMWTQEVFGRQ) are extracellular. An N-linked (GlcNAc...) asparagine glycan is attached at asparagine 199. The helical transmembrane segment at 214-234 (MAVIMAHFLLGFLGPLAIIGT) threads the bilayer. The Cytoplasmic segment spans residues 235 to 272 (CAHLIRAKLLREGWVHANRPKRLLLVLVSALSAGSHLT).

The protein belongs to the G-protein coupled receptor 1 family.

The protein localises to the cell membrane. Orphan receptor. This is Putative G-protein coupled receptor GPR32P1 (GPR32P1) from Homo sapiens (Human).